Here is a 939-residue protein sequence, read N- to C-terminus: U3 small nucleolar RNA-associated protein 21 (939 aa).

The residue at position 2 (S2) is an N-acetylserine. WD repeat units lie at residues 40–71 (ATGTLGSTFYIVTCVGKTFQIYDANTLHLLFV), 81–111 (VALSAHFHYVYAAYENKVGIYKRGIEEHLLE), 119–158 (EHLCIFGDYLCASTDDNSIFIYKKSDPQDKYPSEFYTKLT), 168–201 (VSLQHLATYLNKLTVVTKSNVLLFNVRTGKLVFT), 208–245 (QITTAEPAPVLDIIALGTVTGEVIMFNMRKGKRIRTIK), 252–287 (SSLSFRTDGSSHLSVGTSSGDLIFYDLDRRSRIHVL), 295–347 (YGGV…RSRG), 354–388 (SYIAFADSQSHFMLSASKDRSLWSFSLRKDAQSQE), 415–454 (VALAIENARIGEWENIITAHKDEKFARTWDMRNKRVGRWT), 463–497 (VKSVAMSQCGNFGFIGSSNGSITIYNMQSGILRKK), 505–541 (VTGISLDGMNRKMVSCGLDGIVGFYDFNKSTLLGKLK), 546–581 (ITAMVYHRSSDLFALALDDLSIVVIDAVTQRVVRQL), 583–624 (GHSN…DGII), and 626–664 (DNVATNVKFSPNGDLLATTHVTGNGICIWTNRAQFKTVS). S772 is modified (phosphoserine).

As to quaternary structure, interacts with snoRNA U3. Interacts with MPP10. Interacts (via WD repeats) with UTP18. Component of the ribosomal small subunit (SSU) processome composed of at least 40 protein subunits and snoRNA U3.

The protein localises to the nucleus. The protein resides in the nucleolus. In terms of biological role, involved in nucleolar processing of pre-18S ribosomal RNA and ribosome assembly. The sequence is that of U3 small nucleolar RNA-associated protein 21 (UTP21) from Saccharomyces cerevisiae (strain ATCC 204508 / S288c) (Baker's yeast).